Consider the following 354-residue polypeptide: Chorismate synthase (354 aa).

Arg48 contributes to the NADP(+) binding site. Residues 126 to 128, Ala278, 293 to 297, and Arg319 each bind FMN; these read RAS and KPIPS.

This sequence belongs to the chorismate synthase family. In terms of assembly, homotetramer. The cofactor is FMNH2.

It catalyses the reaction 5-O-(1-carboxyvinyl)-3-phosphoshikimate = chorismate + phosphate. The protein operates within metabolic intermediate biosynthesis; chorismate biosynthesis; chorismate from D-erythrose 4-phosphate and phosphoenolpyruvate: step 7/7. Its function is as follows. Catalyzes the anti-1,4-elimination of the C-3 phosphate and the C-6 proR hydrogen from 5-enolpyruvylshikimate-3-phosphate (EPSP) to yield chorismate, which is the branch point compound that serves as the starting substrate for the three terminal pathways of aromatic amino acid biosynthesis. This reaction introduces a second double bond into the aromatic ring system. The polypeptide is Chorismate synthase (Desulfosudis oleivorans (strain DSM 6200 / JCM 39069 / Hxd3) (Desulfococcus oleovorans)).